The primary structure comprises 417 residues: NADH-quinone oxidoreductase subunit D (417 aa).

This sequence belongs to the complex I 49 kDa subunit family. NDH-1 is composed of 14 different subunits. Subunits NuoB, C, D, E, F, and G constitute the peripheral sector of the complex.

It is found in the cell inner membrane. The catalysed reaction is a quinone + NADH + 5 H(+)(in) = a quinol + NAD(+) + 4 H(+)(out). Functionally, NDH-1 shuttles electrons from NADH, via FMN and iron-sulfur (Fe-S) centers, to quinones in the respiratory chain. The immediate electron acceptor for the enzyme in this species is believed to be ubiquinone. Couples the redox reaction to proton translocation (for every two electrons transferred, four hydrogen ions are translocated across the cytoplasmic membrane), and thus conserves the redox energy in a proton gradient. The sequence is that of NADH-quinone oxidoreductase subunit D from Burkholderia vietnamiensis (strain G4 / LMG 22486) (Burkholderia cepacia (strain R1808)).